A 556-amino-acid chain; its full sequence is MSVSAFNRRWAAVILEALTRHGVRHVCIAPGSRSTPLTLAAAENPAFIHHTHFDERGLGHLALGLAKVSQQPVAVIVTSGTAVANLYPALIEAGLTGEKLILLTADRPPELIDCGANQAIRQAGMFASHPSQTLSLPRPTQDIPARWLVSTIDNALAMLHAGALHINCPFAEPLYGDMNDTGLVWQQRLGDWWQDEKPWLREARRLASDKQRDWFFWRQKRGVVVAGRMSAEEGKKVAQWAQTLGWPLIGDVLSQTGQPLPCADLWLGNAKAVTELQQAQIVVQLGSSLTGKRLLQWQATCEPEEYWVIDNIEGRLDPAHHRGRRLVAKIADWLEMHPAEKRKPWCVEIPRLAELAWQRVVAQRDTFGEAQLAHRIRDYLPEQGQLFVGNSLVVRLIDALSQLPAGYPVYSNRGASGIDGLLSTAAGVQRASAKSTLAIVGDLSALYDLNALALLRQVSAPFVLIVVNNNGGQIFSLLPTPQSKRERFYLMPQNVHFDHAAAMFNLRYHRPENWEELESALAGAWRTPATTVIELVVNDTDGAQTLQQLLAQVSHL.

It belongs to the TPP enzyme family. MenD subfamily. Homodimer. The cofactor is Mg(2+). Mn(2+) is required as a cofactor. It depends on thiamine diphosphate as a cofactor.

The catalysed reaction is isochorismate + 2-oxoglutarate + H(+) = 5-enolpyruvoyl-6-hydroxy-2-succinyl-cyclohex-3-ene-1-carboxylate + CO2. It functions in the pathway quinol/quinone metabolism; 1,4-dihydroxy-2-naphthoate biosynthesis; 1,4-dihydroxy-2-naphthoate from chorismate: step 2/7. It participates in quinol/quinone metabolism; menaquinone biosynthesis. Its function is as follows. Catalyzes the thiamine diphosphate-dependent decarboxylation of 2-oxoglutarate and the subsequent addition of the resulting succinic semialdehyde-thiamine pyrophosphate anion to isochorismate to yield 2-succinyl-5-enolpyruvyl-6-hydroxy-3-cyclohexene-1-carboxylate (SEPHCHC). The protein is 2-succinyl-5-enolpyruvyl-6-hydroxy-3-cyclohexene-1-carboxylate synthase of Salmonella dublin (strain CT_02021853).